Reading from the N-terminus, the 92-residue chain is Non-specific lipid-transfer protein B (92 aa).

Disulfide bonds link Cys3/Cys51, Cys13/Cys28, Cys29/Cys74, and Cys49/Cys88.

This sequence belongs to the plant LTP family.

Its function is as follows. Plant non-specific lipid-transfer proteins transfer phospholipids as well as galactolipids across membranes. May play a role in wax or cutin deposition in the cell walls of expanding epidermal cells and certain secretory tissues. The chain is Non-specific lipid-transfer protein B from Ricinus communis (Castor bean).